Reading from the N-terminus, the 515-residue chain is Tetratricopeptide repeat protein 8 (515 aa).

The TPR 1 repeat unit spans residues Glu4 to Asp37. Disordered stretches follow at residues Arg89–Val109 and Pro118–Gln137. 7 TPR repeats span residues Trp225 to Val258, Asp259 to Glu291, Val292 to His325, Val326 to Asn359, Cys360 to Glu393, Ala397 to His430, and Glu432 to Met464.

Part of BBSome complex, that contains BBS1, BBS2, BBS4, BBS5, BBS7, BBS8/TTC8, BBS9 and BBIP10. Interacts with PCM1. Interacts with CCDC28B. Interacts with PKD1. In terms of tissue distribution, isoform 1 is retina-specific whereas isoform 2 is ubiquitously expressed.

Its subcellular location is the cytoplasm. The protein localises to the cytoskeleton. The protein resides in the microtubule organizing center. It localises to the centrosome. It is found in the centriole. Its subcellular location is the cell projection. The protein localises to the cilium membrane. The protein resides in the centriolar satellite. It localises to the cilium. Its function is as follows. The BBSome complex is thought to function as a coat complex required for sorting of specific membrane proteins to the primary cilia. The BBSome complex is required for ciliogenesis but is dispensable for centriolar satellite function. This ciliogenic function is mediated in part by the Rab8 GDP/GTP exchange factor, which localizes to the basal body and contacts the BBSome. Rab8(GTP) enters the primary cilium and promotes extension of the ciliary membrane. Firstly the BBSome associates with the ciliary membrane and binds to RAB3IP/Rabin8, the guanosyl exchange factor (GEF) for Rab8 and then the Rab8-GTP localizes to the cilium and promotes docking and fusion of carrier vesicles to the base of the ciliary membrane. The BBSome complex, together with the LTZL1, controls SMO ciliary trafficking and contributes to the sonic hedgehog (SHH) pathway regulation. Required for proper BBSome complex assembly and its ciliary localization. The chain is Tetratricopeptide repeat protein 8 (Ttc8) from Mus musculus (Mouse).